The chain runs to 273 residues: Dermonecrotic toxin LdSicTox-alphaIB1aiv (273 aa).

The active site involves H5. The Mg(2+) site is built by E25 and D27. The active-site Nucleophile is H41. Cystine bridges form between C45–C51 and C47–C190. Residue D85 participates in Mg(2+) binding. N-linked (GlcNAc...) asparagine glycosylation is present at N250.

The protein belongs to the arthropod phospholipase D family. Class II subfamily. Requires Mg(2+) as cofactor. In terms of tissue distribution, expressed by the venom gland.

It is found in the secreted. It catalyses the reaction an N-(acyl)-sphingosylphosphocholine = an N-(acyl)-sphingosyl-1,3-cyclic phosphate + choline. The enzyme catalyses an N-(acyl)-sphingosylphosphoethanolamine = an N-(acyl)-sphingosyl-1,3-cyclic phosphate + ethanolamine. The catalysed reaction is a 1-acyl-sn-glycero-3-phosphocholine = a 1-acyl-sn-glycero-2,3-cyclic phosphate + choline. It carries out the reaction a 1-acyl-sn-glycero-3-phosphoethanolamine = a 1-acyl-sn-glycero-2,3-cyclic phosphate + ethanolamine. Functionally, dermonecrotic toxins cleave the phosphodiester linkage between the phosphate and headgroup of certain phospholipids (sphingolipid and lysolipid substrates), forming an alcohol (often choline) and a cyclic phosphate. This toxin acts on sphingomyelin (SM). It may also act on ceramide phosphoethanolamine (CPE), lysophosphatidylcholine (LPC) and lysophosphatidylethanolamine (LPE), but not on lysophosphatidylserine (LPS), and lysophosphatidylglycerol (LPG). It acts by transphosphatidylation, releasing exclusively cyclic phosphate products as second products. Induces dermonecrosis, hemolysis, increased vascular permeability, edema, inflammatory response, and platelet aggregation. This is Dermonecrotic toxin LdSicTox-alphaIB1aiv from Loxosceles deserta (Desert recluse spider).